Consider the following 404-residue polypeptide: L-cysteine:1D-myo-inositol 2-amino-2-deoxy-alpha-D-glucopyranoside ligase (404 aa).

Cys47 contacts Zn(2+). L-cysteinyl-5'-AMP-binding positions include 47-50, Thr62, and 85-87; these read CGIT and NIT. The 'HIGH' region motif lies at 49 to 59; that stretch reads ITPYDSTHLGH. The 'ERGGDP' region signature appears at 188–193; it reads ERGGDP. Residue Trp228 participates in L-cysteinyl-5'-AMP binding. Cys232 serves as a coordination point for Zn(2+). 250–252 serves as a coordination point for L-cysteinyl-5'-AMP; sequence GSD. His257 serves as a coordination point for Zn(2+). Ile284 lines the L-cysteinyl-5'-AMP pocket. The 'KMSKS' region signature appears at 290–294; it reads KMSKS.

This sequence belongs to the class-I aminoacyl-tRNA synthetase family. MshC subfamily. In terms of assembly, monomer. Zn(2+) is required as a cofactor.

It catalyses the reaction 1D-myo-inositol 2-amino-2-deoxy-alpha-D-glucopyranoside + L-cysteine + ATP = 1D-myo-inositol 2-(L-cysteinylamino)-2-deoxy-alpha-D-glucopyranoside + AMP + diphosphate + H(+). Functionally, catalyzes the ATP-dependent condensation of GlcN-Ins and L-cysteine to form L-Cys-GlcN-Ins. In Corynebacterium striatum, this protein is L-cysteine:1D-myo-inositol 2-amino-2-deoxy-alpha-D-glucopyranoside ligase.